The chain runs to 63 residues: Cecropin-A2 (63 aa).

An N-terminal signal peptide occupies residues 1 to 23 (MNFYNIFVFVALILAITIGQSEA). Arginine amide is present on Arg62.

The protein belongs to the cecropin family. Strongly expressed in larval, pupal and adult fat body and hemocytes after injection of bacteria. Maximal expression in the adult involves fat body cells of the head, thorax and abdomen.

The protein localises to the secreted. In terms of biological role, cecropins have lytic and antibacterial activity against several Gram-positive and Gram-negative bacteria. The protein is Cecropin-A2 of Drosophila melanogaster (Fruit fly).